The chain runs to 366 residues: uncharacterized protein (366 aa).

The CP-type G domain occupies leucine 59–asparagine 222.

Belongs to the TRAFAC class YlqF/YawG GTPase family.

Its function is as follows. Binds GTP and GDP. This is an uncharacterized protein from Bacillus subtilis (strain 168).